A 244-amino-acid polypeptide reads, in one-letter code: 1-(5-phosphoribosyl)-5-[(5-phosphoribosylamino)methylideneamino] imidazole-4-carboxamide isomerase (244 aa).

Catalysis depends on aspartate 10, which acts as the Proton acceptor. Aspartate 132 functions as the Proton donor in the catalytic mechanism.

This sequence belongs to the HisA/HisF family.

It is found in the cytoplasm. The catalysed reaction is 1-(5-phospho-beta-D-ribosyl)-5-[(5-phospho-beta-D-ribosylamino)methylideneamino]imidazole-4-carboxamide = 5-[(5-phospho-1-deoxy-D-ribulos-1-ylimino)methylamino]-1-(5-phospho-beta-D-ribosyl)imidazole-4-carboxamide. It participates in amino-acid biosynthesis; L-histidine biosynthesis; L-histidine from 5-phospho-alpha-D-ribose 1-diphosphate: step 4/9. The sequence is that of 1-(5-phosphoribosyl)-5-[(5-phosphoribosylamino)methylideneamino] imidazole-4-carboxamide isomerase from Stenotrophomonas maltophilia (strain R551-3).